We begin with the raw amino-acid sequence, 151 residues long: Large ribosomal subunit protein uL13 (151 aa).

It belongs to the universal ribosomal protein uL13 family. In terms of assembly, part of the 50S ribosomal subunit.

This protein is one of the early assembly proteins of the 50S ribosomal subunit, although it is not seen to bind rRNA by itself. It is important during the early stages of 50S assembly. This chain is Large ribosomal subunit protein uL13, found in Synechococcus sp. (strain JA-3-3Ab) (Cyanobacteria bacterium Yellowstone A-Prime).